Here is a 238-residue protein sequence, read N- to C-terminus: LexA repressor (238 aa).

The H-T-H motif DNA-binding region spans 26–46 (FDEMKDALDLASKSGIHRLIT). Active-site for autocatalytic cleavage activity residues include serine 158 and lysine 196.

It belongs to the peptidase S24 family. As to quaternary structure, homodimer.

The catalysed reaction is Hydrolysis of Ala-|-Gly bond in repressor LexA.. Represses a number of genes involved in the response to DNA damage (SOS response), including recA and lexA. In the presence of single-stranded DNA, RecA interacts with LexA causing an autocatalytic cleavage which disrupts the DNA-binding part of LexA, leading to derepression of the SOS regulon and eventually DNA repair. This is LexA repressor from Rhizobium meliloti (strain 1021) (Ensifer meliloti).